The following is a 139-amino-acid chain: uncharacterized protein (139 aa).

This is an uncharacterized protein from Invertebrate iridescent virus 3 (IIV-3).